The following is a 316-amino-acid chain: DNA-directed RNA polymerase subunit alpha (316 aa).

An alpha N-terminal domain (alpha-NTD) region spans residues 1–230 (MIEFEKPNIH…EHLAMFVDLT (230 aa)). The segment at 247-316 (KEKMLEMTIE…DLGLSLRKED (70 aa)) is alpha C-terminal domain (alpha-CTD).

The protein belongs to the RNA polymerase alpha chain family. In terms of assembly, homodimer. The RNAP catalytic core consists of 2 alpha, 1 beta, 1 beta' and 1 omega subunit. When a sigma factor is associated with the core the holoenzyme is formed, which can initiate transcription.

The enzyme catalyses RNA(n) + a ribonucleoside 5'-triphosphate = RNA(n+1) + diphosphate. Functionally, DNA-dependent RNA polymerase catalyzes the transcription of DNA into RNA using the four ribonucleoside triphosphates as substrates. In Levilactobacillus brevis (strain ATCC 367 / BCRC 12310 / CIP 105137 / JCM 1170 / LMG 11437 / NCIMB 947 / NCTC 947) (Lactobacillus brevis), this protein is DNA-directed RNA polymerase subunit alpha.